Consider the following 509-residue polypeptide: Methionine--tRNA ligase (509 aa).

The 'HIGH' region motif lies at 12–22 (YYVNDVPHIGH). The short motif at 295 to 299 (KISKS) is the 'KMSKS' region element. Lys298 is an ATP binding site.

It belongs to the class-I aminoacyl-tRNA synthetase family. MetG type 2B subfamily. As to quaternary structure, monomer.

The protein localises to the cytoplasm. It carries out the reaction tRNA(Met) + L-methionine + ATP = L-methionyl-tRNA(Met) + AMP + diphosphate. In terms of biological role, is required not only for elongation of protein synthesis but also for the initiation of all mRNA translation through initiator tRNA(fMet) aminoacylation. The protein is Methionine--tRNA ligase of Rickettsia bellii (strain RML369-C).